Consider the following 457-residue polypeptide: MSGFTNKDGRQNLAPCFNFRSSPFRLTVGERELKLEEDKNQLSKGLDPWTSNPTASASTLHYLLQEKERAQQAHEQLQIYQQQQGFGSFLQHRIRQPASRGPGGGGGGGDGGGSSGESTPVDALATAFGAGRIVRSAAGRKDRHSKVCTARGLRDRRVRLAAHTAIRFYDVQDRLGYDRPSKAVDWLMRNAKAAIDELPDRAEAPPPPAAASTEQPEGTEQANSTSYGFGNTTGGTMTSAASAAAGSFLPHSLGADRVSDSVKSLFPSSSTASGAASAGHDEYRGSPPDLLSRTTSNQQPQELCLTLQSNQHQIFSHVSSNHHGMISSAGVPGWPDHSQRMQAWHAPENSTGDGRGGGNGDGYMFAMPSRQGLDQSQLFSHGEPLQSSGRGWASARAWLDPLAVAAIHHQPSTMAAGQVGFGHLVGGAGGGGGFMGFLAPAAQRLEGEEEHGSEVIR.

Residues 58–84 adopt a coiled-coil conformation; it reads STLHYLLQEKERAQQAHEQLQIYQQQQ. Positions 95 to 121 are disordered; that stretch reads RQPASRGPGGGGGGGDGGGSSGESTPV. Positions 101–115 are enriched in gly residues; it reads GPGGGGGGGDGGGSS. In terms of domain architecture, TCP spans 140–198; that stretch reads RKDRHSKVCTARGLRDRRVRLAAHTAIRFYDVQDRLGYDRPSKAVDWLMRNAKAAIDEL. Disordered regions lie at residues 199–231 and 263–299; these read PDRA…GFGN and KSLF…SNQQ. Residues 212–230 are compositionally biased toward polar residues; sequence STEQPEGTEQANSTSYGFG. The segment covering 268–278 has biased composition (low complexity); that stretch reads SSSTASGAASA.

As to quaternary structure, forms homodimers and heterodimers.

It is found in the nucleus. Functionally, transcription activator. Binds the promoter core sequence 5'-GGNCC-3'. The protein is Transcription factor PCF7 (PCF7) of Oryza sativa subsp. indica (Rice).